The sequence spans 100 residues: Aspartyl/glutamyl-tRNA(Asn/Gln) amidotransferase subunit C (100 aa).

This sequence belongs to the GatC family. Heterotrimer of A, B and C subunits.

The catalysed reaction is L-glutamyl-tRNA(Gln) + L-glutamine + ATP + H2O = L-glutaminyl-tRNA(Gln) + L-glutamate + ADP + phosphate + H(+). It carries out the reaction L-aspartyl-tRNA(Asn) + L-glutamine + ATP + H2O = L-asparaginyl-tRNA(Asn) + L-glutamate + ADP + phosphate + 2 H(+). Allows the formation of correctly charged Asn-tRNA(Asn) or Gln-tRNA(Gln) through the transamidation of misacylated Asp-tRNA(Asn) or Glu-tRNA(Gln) in organisms which lack either or both of asparaginyl-tRNA or glutaminyl-tRNA synthetases. The reaction takes place in the presence of glutamine and ATP through an activated phospho-Asp-tRNA(Asn) or phospho-Glu-tRNA(Gln). The chain is Aspartyl/glutamyl-tRNA(Asn/Gln) amidotransferase subunit C from Rickettsia africae (strain ESF-5).